Reading from the N-terminus, the 432-residue chain is D-amino acid dehydrogenase (432 aa).

An FAD-binding site is contributed by 3–17 (VVILGSGVVGVASAW).

It belongs to the DadA oxidoreductase family. FAD serves as cofactor.

The enzyme catalyses a D-alpha-amino acid + A + H2O = a 2-oxocarboxylate + AH2 + NH4(+). Its pathway is amino-acid degradation; D-alanine degradation; NH(3) and pyruvate from D-alanine: step 1/1. In terms of biological role, oxidative deamination of D-amino acids. This Escherichia coli O45:K1 (strain S88 / ExPEC) protein is D-amino acid dehydrogenase.